The primary structure comprises 372 residues: Y-box-binding protein 3 (372 aa).

The interval 1 to 82 is disordered; the sequence is MSEAGEATTT…LATAAGSEDA (82 aa). Ser2 carries the post-translational modification N-acetylserine. Ser2 is modified (phosphoserine). The segment covering 7-28 has biased composition (low complexity); it reads ATTTTTTTLPQAPTEAAAAAPQ. Ser34 is modified (phosphoserine). Residues 35–79 show a composition bias toward low complexity; that stretch reads PVGSGAPQAAAPAPAAHVAGNPGGDAAPAATGTAAAASLATAAGS. In terms of domain architecture, CSD spans 93 to 157; that stretch reads GTVKWFNVRN…GEKGAEAANV (65 aa). A phosphoserine mark is found at Ser134, Ser201, Ser203, and Ser204. Positions 181–372 are disordered; that stretch reads YYGRRRGPPR…APPTQQSSAE (192 aa). A compositionally biased stretch (basic residues) spans 222-238; that stretch reads QLRRPQYRPQYRQRRFP. Arg251 is modified (omega-N-methylarginine). A compositionally biased stretch (polar residues) spans 314–324; the sequence is QQATSGPNQPS. A Phosphoserine modification is found at Ser324. Position 326 is an omega-N-methylarginine (Arg326). A compositionally biased stretch (basic residues) spans 327–340; sequence RGYRRPYNYRRRPR. 3 positions are modified to phosphoserine: Ser346, Ser369, and Ser370.

Found in a mRNP complex with YBX2. Interacts with RRP1B. Highly expressed in skeletal muscle and heart.

The protein resides in the cytoplasm. The protein localises to the nucleus. Functionally, binds to the GM-CSF promoter. Seems to act as a repressor. Also binds to full-length mRNA and to short RNA sequences containing the consensus site 5'-UCCAUCA-3'. May have a role in translation repression. The protein is Y-box-binding protein 3 (YBX3) of Homo sapiens (Human).